The chain runs to 460 residues: Bifunctional protein GlmU (460 aa).

The pyrophosphorylase stretch occupies residues 1–232; sequence MAISAALILA…PDEIMGVNDR (232 aa). UDP-N-acetyl-alpha-D-glucosamine is bound by residues 9-12, lysine 23, glutamine 75, and 80-81; these read LAAG and GT. Residue aspartate 105 coordinates Mg(2+). UDP-N-acetyl-alpha-D-glucosamine contacts are provided by glycine 142, glutamate 157, asparagine 172, and asparagine 230. Asparagine 230 provides a ligand contact to Mg(2+). Residues 233–253 form a linker region; that stretch reads VQLAHAARVLRQRVNLQLMLA. The tract at residues 254–460 is N-acetyltransferase; that stretch reads GVTLIDPDQT…GWCLKKRDNG (207 aa). UDP-N-acetyl-alpha-D-glucosamine-binding residues include arginine 336 and lysine 354. The active-site Proton acceptor is histidine 366. 2 residues coordinate UDP-N-acetyl-alpha-D-glucosamine: tyrosine 369 and asparagine 380. Acetyl-CoA-binding positions include 389–390, serine 408, alanine 426, and arginine 443; that span reads NY.

The protein in the N-terminal section; belongs to the N-acetylglucosamine-1-phosphate uridyltransferase family. In the C-terminal section; belongs to the transferase hexapeptide repeat family. In terms of assembly, homotrimer. Mg(2+) serves as cofactor.

Its subcellular location is the cytoplasm. It catalyses the reaction alpha-D-glucosamine 1-phosphate + acetyl-CoA = N-acetyl-alpha-D-glucosamine 1-phosphate + CoA + H(+). The catalysed reaction is N-acetyl-alpha-D-glucosamine 1-phosphate + UTP + H(+) = UDP-N-acetyl-alpha-D-glucosamine + diphosphate. Its pathway is nucleotide-sugar biosynthesis; UDP-N-acetyl-alpha-D-glucosamine biosynthesis; N-acetyl-alpha-D-glucosamine 1-phosphate from alpha-D-glucosamine 6-phosphate (route II): step 2/2. The protein operates within nucleotide-sugar biosynthesis; UDP-N-acetyl-alpha-D-glucosamine biosynthesis; UDP-N-acetyl-alpha-D-glucosamine from N-acetyl-alpha-D-glucosamine 1-phosphate: step 1/1. It functions in the pathway bacterial outer membrane biogenesis; LPS lipid A biosynthesis. In terms of biological role, catalyzes the last two sequential reactions in the de novo biosynthetic pathway for UDP-N-acetylglucosamine (UDP-GlcNAc). The C-terminal domain catalyzes the transfer of acetyl group from acetyl coenzyme A to glucosamine-1-phosphate (GlcN-1-P) to produce N-acetylglucosamine-1-phosphate (GlcNAc-1-P), which is converted into UDP-GlcNAc by the transfer of uridine 5-monophosphate (from uridine 5-triphosphate), a reaction catalyzed by the N-terminal domain. In Trichlorobacter lovleyi (strain ATCC BAA-1151 / DSM 17278 / SZ) (Geobacter lovleyi), this protein is Bifunctional protein GlmU.